The following is a 309-amino-acid chain: General transcription factor IIH subunit 3 (309 aa).

The C4-type zinc finger occupies 269-286; that stretch reads CSVCLSIFCNFSPICTTC.

Belongs to the TFB4 family. Part of a TFIID-containing RNA polymerase II pre-initiation complex that is composed of TBP and at least GTF2A1, GTF2A2, GTF2E1, GTF2E2, GTF2F1, GTF2H2, GTF2H3, GTF2H4, GTF2H5, GTF2B, TCEA1, ERCC2, ERCC3, TAF1, TAF2, TAF3, TAF4, TAF5, TAF6, TAF7, TAF8, TAF9, TAF10, TAF11, TAF12 and TAF13. Component of the 7-subunit TFIIH core complex composed of XPB/ERCC3, XPD/ERCC2, GTF2H1, GTF2H2, GTF2H3, GTF2H4 and GTF2H5, which is active in NER. The core complex associates with the 3-subunit CDK-activating kinase (CAK) module composed of CCNH/cyclin H, CDK7 and MNAT1 to form the 10-subunit holoenzyme (holo-TFIIH) active in transcription. Interacts with RARA; the interaction requires prior phosphorylation of RARA on 'Ser-369' which then enhances interaction of RARA with CDK7.

The protein resides in the nucleus. Functionally, component of the general transcription and DNA repair factor IIH (TFIIH) core complex, which is involved in general and transcription-coupled nucleotide excision repair (NER) of damaged DNA and, when complexed to CAK, in RNA transcription by RNA polymerase II. In NER, TFIIH acts by opening DNA around the lesion to allow the excision of the damaged oligonucleotide and its replacement by a new DNA fragment. In transcription, TFIIH has an essential role in transcription initiation. When the pre-initiation complex (PIC) has been established, TFIIH is required for promoter opening and promoter escape. Phosphorylation of the C-terminal tail (CTD) of the largest subunit of RNA polymerase II by the kinase module CAK controls the initiation of transcription. In Bos taurus (Bovine), this protein is General transcription factor IIH subunit 3 (GTF2H3).